A 314-amino-acid polypeptide reads, in one-letter code: MANILTIFLLISTLVTGIFWSFYCIKSFKNYLINKKIINNNNFHQEKIEKSKNKTYFLKSLASFFPIFLAIFIIRSFIYEPFQIPSGSMMPTLLVGDFILVEKFSYGIKEPITHKILIRTKKPNRGDIAVFQHPTDHNINYIKRIIGLPGDKIRYDLHDKHIHICTNYSDQRGCEKKISINYSQSRSSNFIQKIYFSNKNNIKEDKNIYNSLYFDIVEEIIEDVKHSILLLNSIKNTKENYFQQKNMPKLTWIVPKGEYFMMGDNRDNSLDSRYWGFVPEKNLVGKAIKIWMSFDKNENEWPTGIRINRIGSIH.

Residues 5 to 25 form a helical membrane-spanning segment; the sequence is LTIFLLISTLVTGIFWSFYCI. The Cytoplasmic portion of the chain corresponds to 26 to 63; it reads KSFKNYLINKKIINNNNFHQEKIEKSKNKTYFLKSLAS. A helical transmembrane segment spans residues 64 to 84; that stretch reads FFPIFLAIFIIRSFIYEPFQI. The Extracellular portion of the chain corresponds to 85–314; sequence PSGSMMPTLL…IRINRIGSIH (230 aa). Residues Ser-88 and Lys-143 contribute to the active site.

Belongs to the peptidase S26 family.

It localises to the cell membrane. It carries out the reaction Cleavage of hydrophobic, N-terminal signal or leader sequences from secreted and periplasmic proteins.. The sequence is that of Signal peptidase I (lepB) from Buchnera aphidicola subsp. Acyrthosiphon pisum (strain APS) (Acyrthosiphon pisum symbiotic bacterium).